Consider the following 187-residue polypeptide: MPSDREGLWMLAAFALMTLFLLDNVGVTQAKSFDDVRCKCICPPYRNISGHIYNRNFTQKDCNCLHVVDPMPVPGNDVEAYCLLCECKYEERSTNTIRVTIIIFLSVVGALLLYMLFLLLVDPLIRKPDPLAQTLHNEEDSEDIQPQMSGDPARGNTVLERVEGAQQRWKKQVQEQRKTVFDRHKML.

2 consecutive transmembrane segments (helical) span residues 10–27 (MLAA…NVGV) and 99–121 (VTII…LLLV).

The protein belongs to the TMEM9 family.

It is found in the membrane. In Takifugu rubripes (Japanese pufferfish), this protein is Putative protein 2.